The primary structure comprises 123 residues: Large ribosomal subunit protein bL21 (123 aa).

This sequence belongs to the bacterial ribosomal protein bL21 family. Part of the 50S ribosomal subunit. Contacts protein L20.

This protein binds to 23S rRNA in the presence of protein L20. The sequence is that of Large ribosomal subunit protein bL21 from Rippkaea orientalis (strain PCC 8801 / RF-1) (Cyanothece sp. (strain PCC 8801)).